The following is a 241-amino-acid chain: tRNA (guanine-N(1)-)-methyltransferase (241 aa).

S-adenosyl-L-methionine-binding positions include Gly-108 and 127 to 132; that span reads LGDYVL.

It belongs to the RNA methyltransferase TrmD family. Homodimer.

It is found in the cytoplasm. It catalyses the reaction guanosine(37) in tRNA + S-adenosyl-L-methionine = N(1)-methylguanosine(37) in tRNA + S-adenosyl-L-homocysteine + H(+). Its function is as follows. Specifically methylates guanosine-37 in various tRNAs. In Streptococcus suis (strain 98HAH33), this protein is tRNA (guanine-N(1)-)-methyltransferase.